Reading from the N-terminus, the 458-residue chain is Mannan endo-1,6-alpha-mannosidase DFG5 (458 aa).

A signal peptide spans 1-26 (MIVNISAKMILSICFTFLSFFKATHA). Asparagine 89, asparagine 114, asparagine 138, asparagine 208, asparagine 231, asparagine 245, asparagine 270, asparagine 273, and asparagine 417 each carry an N-linked (GlcNAc...) asparagine glycan. The segment at 399–418 (PYKEDNGGTSKGDANAGMNS) is disordered. The GPI-anchor amidated glycine moiety is linked to residue glycine 437. Positions 438 to 458 (AAIITAVILSVLTGGAVWMLF) are cleaved as a propeptide — removed in mature form.

Belongs to the glycosyl hydrolase 76 family. N-glycosylated.

The protein localises to the cell membrane. The enzyme catalyses Random hydrolysis of (1-&gt;6)-alpha-D-mannosidic linkages in unbranched (1-&gt;6)-mannans.. Required for normal synthesis of the cell wall. The protein is Mannan endo-1,6-alpha-mannosidase DFG5 (DFG5) of Saccharomyces cerevisiae (strain ATCC 204508 / S288c) (Baker's yeast).